The primary structure comprises 652 residues: Acetyl-coenzyme A synthetase (652 aa).

Residues R193–K196 and T312 contribute to the CoA site. Residues G388–P390, D412–T417, D501, and R516 contribute to the ATP site. S524 contributes to the CoA binding site. Mg(2+) contacts are provided by V538, H540, and V543. K611 bears the N6-acetyllysine mark.

The protein belongs to the ATP-dependent AMP-binding enzyme family. It depends on Mg(2+) as a cofactor. In terms of processing, acetylated. Deacetylation by the SIR2-homolog deacetylase activates the enzyme.

It carries out the reaction acetate + ATP + CoA = acetyl-CoA + AMP + diphosphate. Catalyzes the conversion of acetate into acetyl-CoA (AcCoA), an essential intermediate at the junction of anabolic and catabolic pathways. AcsA undergoes a two-step reaction. In the first half reaction, AcsA combines acetate with ATP to form acetyl-adenylate (AcAMP) intermediate. In the second half reaction, it can then transfer the acetyl group from AcAMP to the sulfhydryl group of CoA, forming the product AcCoA. This is Acetyl-coenzyme A synthetase from Streptomyces avermitilis (strain ATCC 31267 / DSM 46492 / JCM 5070 / NBRC 14893 / NCIMB 12804 / NRRL 8165 / MA-4680).